The sequence spans 243 residues: Uridylate kinase (243 aa).

14–17 contributes to the ATP binding site; that stretch reads KLSG. Position 57 (G57) interacts with UMP. ATP contacts are provided by G58 and R62. UMP-binding positions include D77 and 139-146; that span reads TGRPYFTT. 3 residues coordinate ATP: N167, Y173, and D176.

This sequence belongs to the UMP kinase family. As to quaternary structure, homohexamer.

The protein resides in the cytoplasm. It catalyses the reaction UMP + ATP = UDP + ADP. It participates in pyrimidine metabolism; CTP biosynthesis via de novo pathway; UDP from UMP (UMPK route): step 1/1. Its activity is regulated as follows. Inhibited by UTP. Functionally, catalyzes the reversible phosphorylation of UMP to UDP. The polypeptide is Uridylate kinase (Mycoplasmopsis pulmonis (strain UAB CTIP) (Mycoplasma pulmonis)).